The sequence spans 513 residues: OBERON-like protein (513 aa).

A PHD-type zinc finger spans residues 166 to 235; it reads NGFCNLCMCV…VFRCQACSXT (70 aa). Positions 372-469 form a coiled coil; the sequence is RELADKAREA…LYEKIKLQES (98 aa). The disordered stretch occupies residues 493–513; that stretch reads YNGPPKADSQSNDCHPFRTNP. The segment covering 500-513 has biased composition (polar residues); sequence DSQSNDCHPFRTNP.

Self-interacts and probably forms heteromers. Binds to VPg of pea seed borne mosaic virus (PSbMV), turnip mosaic virus (TuMV) and lettuce mosaic virus (LMV), but not with VPg of tobacco etch virus (TEV), cowpea mosaic virus (CPMV), tomato black ring virus (TBRV) and grapevine fan leaf virus (GFLV).

Its subcellular location is the nucleus. Its function is as follows. Required for the maintenance and/or establishment of both the shoot and root meristems, probably by controlling the expression of the meristem genes and of genes required for auxin responses. Involved in the development of the basal pole and in auxin-mediated root and vascular development in the embryo. Confers sensitivity to turnip mosaic virus (TuMV) probably by promoting viral movement and multiplication via interaction with TuMV VPg. This Pisum sativum (Garden pea) protein is OBERON-like protein (PVIP).